Consider the following 248-residue polypeptide: Pulmonary surfactant-associated protein A (248 aa).

An N-terminal signal peptide occupies residues 1–20 (MLLCSLTLTLLWMVASGLEC). Residues 28–100 (GSPGIPGTPG…PGERGPPGFP (73 aa)) form the Collagen-like domain. The segment at 29–102 (SPGIPGTPGS…ERGPPGFPAY (74 aa)) is disordered. Residues Pro-30, Pro-33, Pro-36, Pro-42, Pro-54, Pro-57, Pro-63, Pro-67, and Pro-70 each carry the 4-hydroxyproline modification. Residues 42–51 (PGRDGRDGIK) are compositionally biased toward basic and acidic residues. Over residues 54 to 65 (PGPPGPMGPPGG) the composition is skewed to pro residues. Residues 69-82 (LPGRDGMTGAPGLP) are compositionally biased toward low complexity. A compositionally biased stretch (basic and acidic residues) spans 84-93 (ERGEKGEPGE). The 117-residue stretch at 132-248 (LAVGEKVFST…LQYRLAICEF (117 aa)) folds into the C-type lectin domain. Intrachain disulfides connect Cys-155-Cys-246 and Cys-224-Cys-238. N-linked (GlcNAc...) asparagine glycosylation occurs at Asn-207. Glu-215, Arg-217, Asn-234, and Asp-235 together coordinate Ca(2+).

This sequence belongs to the SFTPA family. Oligomeric complex of 6 set of homotrimers.

It localises to the secreted. It is found in the extracellular space. The protein localises to the extracellular matrix. The protein resides in the surface film. Functionally, in presence of calcium ions, it binds to surfactant phospholipids and contributes to lower the surface tension at the air-liquid interface in the alveoli of the mammalian lung and is essential for normal respiration. Enhances the expression of MYO18A/SP-R210 on alveolar macrophages. The protein is Pulmonary surfactant-associated protein A (SFTPA1) of Bos taurus (Bovine).